Here is an 830-residue protein sequence, read N- to C-terminus: G-type lectin S-receptor-like serine/threonine-protein kinase SD1-13 (830 aa).

Residues 1 to 21 form the signal peptide; it reads MGCLLILLLTLICFSLRLCLA. Positions 22 to 145 constitute a Bulb-type lectin domain; sequence TDVITFSSEF…TNTGDEILWE (124 aa). Residues 22–434 lie on the Extracellular side of the membrane; it reads TDVITFSSEF…SEFKKRTNRS (413 aa). N-linked (GlcNAc...) asparagine glycosylation is found at Asn40, Asn53, and Asn82. Residues 283–321 form the EGF-like; atypical domain; sequence PSTKCDTYATCGQFASCRFNPGSTPPCMCIRGFKPQSYA. Cystine bridges form between Cys287–Cys299 and Cys293–Cys309. Residues Asn327, Asn384, and Asn432 are each glycosylated (N-linked (GlcNAc...) asparagine). Positions 340–423 constitute a PAN domain; that stretch reads CESRDNNDGS…TGVVFYIRLA (84 aa). Disulfide bonds link Cys377/Cys398 and Cys381/Cys387. A helical membrane pass occupies residues 435–455; that stretch reads IVITVTLLVGAFLFAGTVVLA. Residues 456–830 lie on the Cytoplasmic side of the membrane; that stretch reads LWKIAKHREK…NVSLTKITGR (375 aa). The Protein kinase domain maps to 512 to 798; sequence FSITNKLGQG…NLPEPKQPAF (287 aa). Residues 518–526 and Lys540 each bind ATP; that span reads LGQGGFGAV. At Thr545 the chain carries Phosphothreonine. Ser546 and Ser561 each carry phosphoserine. Residues 601–618 form a caM-binding region; sequence VKQRLLDWKTRFNIIDGI. The Proton acceptor role is filled by Asp637. A phosphoserine mark is found at Ser641, Ser654, and Ser670. Position 671 is a phosphothreonine (Thr671). Ser714, Ser715, Ser726, Ser805, Ser809, Ser810, Ser813, Ser818, and Ser823 each carry phosphoserine. The tract at residues 789 to 830 is disordered; sequence NLPEPKQPAFIPRRGTSEVESSGQSDPRASINNVSLTKITGR. Over residues 806–830 the composition is skewed to polar residues; the sequence is EVESSGQSDPRASINNVSLTKITGR. Thr825 and Thr828 each carry phosphothreonine.

Belongs to the protein kinase superfamily. Ser/Thr protein kinase family. Interacts with PUB9, PUB13 and PUB14. Binds to calmodulin (CaM) in a Ca(2+)-dependent manner. Post-translationally, autophosphorylated. Mostly expressed in rosette leaves, and, to a lower extent, in cauline leaves and stems.

It localises to the cell membrane. It carries out the reaction L-seryl-[protein] + ATP = O-phospho-L-seryl-[protein] + ADP + H(+). It catalyses the reaction L-threonyl-[protein] + ATP = O-phospho-L-threonyl-[protein] + ADP + H(+). Its function is as follows. Receptor-like serine/threonine-protein kinase that represses the disease resistance signaling pathway triggered in response to bacterial pathogen such as Pseudomonas syringae pv. tomato. The protein is G-type lectin S-receptor-like serine/threonine-protein kinase SD1-13 (SD113) of Arabidopsis thaliana (Mouse-ear cress).